The sequence spans 163 residues: Transcription elongation factor GreB (163 aa).

Residues 54 to 76 (GKRRMREIDRRIRFLTKRLEAAV) adopt a coiled-coil conformation.

It belongs to the GreA/GreB family. GreB subfamily.

In terms of biological role, necessary for efficient RNA polymerase transcription elongation past template-encoded arresting sites. The arresting sites in DNA have the property of trapping a certain fraction of elongating RNA polymerases that pass through, resulting in locked ternary complexes. Cleavage of the nascent transcript by cleavage factors such as GreA or GreB allows the resumption of elongation from the new 3'terminus. GreB releases sequences of up to 9 nucleotides in length. The sequence is that of Transcription elongation factor GreB from Neisseria meningitidis serogroup B (strain ATCC BAA-335 / MC58).